Reading from the N-terminus, the 2157-residue chain is Conidial yellow pigment biosynthesis polyketide synthase (2157 aa).

The segment at 8-244 (YLFGDQTGDF…VMVPIHGPFH (237 aa)) is N-terminal acylcarrier protein transacylase domain (SAT). Residues 376–807 (LSKIAIIGMS…GGNTALLLED (432 aa)) form the Ketosynthase family 3 (KS3) domain. Catalysis depends on for beta-ketoacyl synthase activity residues Cys548, His683, and His725. A malonyl-CoA:ACP transacylase (MAT) domain region spans residues 912–1232 (FLFTGQGAQY…LSSLYLAGVD (321 aa)). Residue Ser1001 is the For acyl/malonyl transferase activity of the active site. The product template (PT) domain stretch occupies residues 1290 to 1603 (TTSAQRVVES…RKILDIALPP (314 aa)). The N-terminal hotdog fold stretch occupies residues 1294–1425 (QRVVESRDDG…CEVKLFDCMA (132 aa)). The PKS/mFAS DH domain occupies 1294–1598 (QRVVESRDDG…FQALSRKILD (305 aa)). Catalysis depends on His1326, which acts as the Proton acceptor; for dehydratase activity. Positions 1453 to 1598 (AHRLRRGMVY…FQALSRKILD (146 aa)) are C-terminal hotdog fold. Catalysis depends on Asp1511, which acts as the Proton donor; for dehydratase activity. A disordered region spans residues 1607 to 1638 (SKAQTSPIQSSAPQKPIETAKPTSRPAPPVTM). The segment covering 1608–1619 (KAQTSPIQSSAP) has biased composition (polar residues). The region spanning 1645–1722 (SAGPSVVVRA…DFKRFVTQLS (78 aa)) is the Carrier 1 domain. Ser1682 is modified (O-(pantetheine 4'-phosphoryl)serine). Positions 1725–1760 (VASDSSSTDRESEYSFNGDSCSGLSSPASPGTVSPP) are disordered. Positions 1741–1759 (NGDSCSGLSSPASPGTVSP) are enriched in polar residues. The 78-residue stretch at 1767–1844 (IHENGTMKEI…QIETALDLKP (78 aa)) folds into the Carrier 2 domain. Ser1804 carries the O-(pantetheine 4'-phosphoryl)serine modification. The disordered stretch occupies residues 1847–1888 (VPTAVPQSQPITLPQSQSTKQLSTRPTSSSDNHPPATSILLQ). Residues 1851–1878 (VPQSQPITLPQSQSTKQLSTRPTSSSDN) show a composition bias toward polar residues. The segment at 1877–2149 (DNHPPATSIL…ELATFMKNAL (273 aa)) is claisen cyclase domain. Residue Ser1967 is the For thioesterase activity of the active site.

The cofactor is pantetheine 4'-phosphate.

The enzyme catalyses 6 malonyl-CoA + acetyl-CoA + 6 H(+) = naphtopyrone YWA1 + 6 CO2 + 7 CoA + H2O. The protein operates within polyketide biosynthesis; heptaketide naphthopyrone YWA1 biosynthesis. Its function is as follows. Non-reducing polyketide synthase that condenses acetate units to form a heptaketide naphthopyrene YWA1, a yellow pigment found in mature asexual spores (conidia), via a polyketomethylene intermediate step. In Emericella nidulans (strain FGSC A4 / ATCC 38163 / CBS 112.46 / NRRL 194 / M139) (Aspergillus nidulans), this protein is Conidial yellow pigment biosynthesis polyketide synthase.